Consider the following 325-residue polypeptide: Prenytransferase adrG (325 aa).

The next 7 membrane-spanning stretches (helical) occupy residues 47–67 (LVGVAFSASISSTKIPIAVLL), 71–91 (MLLSIWSIFLRSAGCVWDDLI), 117–137 (ALLLTVALFACGGTVLIFLPW), 163–183 (PQITLMNIGWAVPMAMHSLGL), 189–209 (MTPTVCMFLFIGSVIIMIDVI), 236–256 (LLSYSLLCASTGFLAMAGVLT), and 258–278 (LGLPFFVLSVGGHFCGFWVLL).

The protein belongs to the UbiA prenyltransferase family. Requires Mg(2+) as cofactor.

The protein localises to the membrane. It catalyses the reaction 3,5-dimethylorsellinate + (2E,6E)-farnesyl diphosphate = (3R)-3-farnesyl-6-hydroxy-2,3,5-trimethyl-4-oxocyclohexa-1,5-diene-1-carboxylate + diphosphate + H(+). It participates in secondary metabolite biosynthesis; terpenoid biosynthesis. Its function is as follows. Prenytransferase; part of the gene cluster that mediates the biosynthesis of andrastins, meroterpenoid compounds that exhibit inhibitory activity against ras farnesyltransferase, suggesting that they could be promising leads for antitumor agents. The first step of the pathway is the synthesis of 3,5-dimethylorsellinic acid (DMOA) by the polyketide synthase adrD via condensation of one acetyl-CoA starter unit with 3 malonyl-CoA units and 2 methylations. DMAO is then converted to farnesyl-DMAO by the prenyltransferase adrG. The methyltransferase adrK catalyzes the methylation of the carboxyl group of farnesyl-DMAO to farnesyl-DMAO methyl ester which is further converted to epoxyfarnesyl-DMAO methyl ester by the FAD-dependent monooxygenase adrH. The terpene cyclase adrI then catalyzes the carbon skeletal rearrangement to generate the andrastin E, the first compound in the pathway having the andrastin scaffold, with the tetracyclic ring system. The post-cyclization tailoring enzymes adrF, adrE, adrJ, and adrA, are involved in the conversion of andrastin E into andrastin A. The short chain dehydrogenase adrF is responsible for the oxidation of the C-3 a hydroxyl group of andrastin E to yield the corresponding ketone, andrastin D. The ketoreductase adrE stereoselectively reduces the carbonyl moiety to reverse the stereochemistry of the C-3 position to yield andrastin F. The acetyltransferase adrJ is the acetyltransferase that attaches the acetyl group to the C-3 hydroxyl group of andrastin F to yield andrastin C. Finally, the cytochrome P450 monooxygenase adrA catalyzes two sequential oxidation reactions of the C-23 methyl group, to generate the corresponding alcohol andrastin B, and aldehyde andrastin A. This is Prenytransferase adrG from Penicillium rubens (strain ATCC 28089 / DSM 1075 / NRRL 1951 / Wisconsin 54-1255) (Penicillium chrysogenum).